The primary structure comprises 305 residues: Probable pyridoxal 5'-phosphate synthase subunit pdx1 (305 aa).

Asp33 is a D-ribose 5-phosphate binding site. Lys90 (schiff-base intermediate with D-ribose 5-phosphate) is an active-site residue. Residue Gly162 coordinates D-ribose 5-phosphate. Residue Arg174 coordinates D-glyceraldehyde 3-phosphate. Residues Gly223 and 244–245 (GS) each bind D-ribose 5-phosphate.

This sequence belongs to the PdxS/SNZ family. As to quaternary structure, homohexamer.

The enzyme catalyses aldehydo-D-ribose 5-phosphate + D-glyceraldehyde 3-phosphate + L-glutamine = pyridoxal 5'-phosphate + L-glutamate + phosphate + 3 H2O + H(+). The protein operates within cofactor biosynthesis; pyridoxal 5'-phosphate biosynthesis. In terms of biological role, catalyzes the formation of pyridoxal 5'-phosphate from ribose 5-phosphate (RBP), glyceraldehyde 3-phosphate (G3P) and ammonia. The ammonia is provided by pdx2. Can also use ribulose 5-phosphate and dihydroxyacetone phosphate as substrates, resulting from enzyme-catalyzed isomerization of RBP and G3P, respectively. In Dictyostelium discoideum (Social amoeba), this protein is Probable pyridoxal 5'-phosphate synthase subunit pdx1 (pdx1).